Reading from the N-terminus, the 154-residue chain is Myoglobin (154 aa).

Positions 2–148 constitute a Globin domain; sequence GLSDGEWQLV…FRNDIAAKYK (147 aa). S4 bears the Phosphoserine mark. Residue H65 coordinates nitrite. H65 serves as a coordination point for O2. T68 is subject to Phosphothreonine. H94 serves as a coordination point for heme b.

It belongs to the globin family. In terms of assembly, monomeric.

The protein resides in the cytoplasm. It is found in the sarcoplasm. The catalysed reaction is Fe(III)-heme b-[protein] + nitric oxide + H2O = Fe(II)-heme b-[protein] + nitrite + 2 H(+). It carries out the reaction H2O2 + AH2 = A + 2 H2O. Monomeric heme protein which primary function is to store oxygen and facilitate its diffusion within muscle tissues. Reversibly binds oxygen through a pentacoordinated heme iron and enables its timely and efficient release as needed during periods of heightened demand. Depending on the oxidative conditions of tissues and cells, and in addition to its ability to bind oxygen, it also has a nitrite reductase activity whereby it regulates the production of bioactive nitric oxide. Under stress conditions, like hypoxia and anoxia, it also protects cells against reactive oxygen species thanks to its pseudoperoxidase activity. The sequence is that of Myoglobin (MB) from Vulpes chama (Cape fox).